The sequence spans 290 residues: Shikimate kinase (290 aa).

81 to 91 is an ATP binding site; it reads PIASGLKSSSA.

It belongs to the GHMP kinase family. Archaeal shikimate kinase subfamily.

The protein localises to the cytoplasm. The enzyme catalyses shikimate + ATP = 3-phosphoshikimate + ADP + H(+). The protein operates within metabolic intermediate biosynthesis; chorismate biosynthesis; chorismate from D-erythrose 4-phosphate and phosphoenolpyruvate: step 5/7. The chain is Shikimate kinase from Methanocella arvoryzae (strain DSM 22066 / NBRC 105507 / MRE50).